The chain runs to 143 residues: FAD synthase (143 aa).

ATP contacts are provided by residues 13–14 (TF), 18–21 (HPGH), and aspartate 96.

This sequence belongs to the archaeal FAD synthase family. In terms of assembly, homodimer. Requires a divalent metal cation as cofactor.

It catalyses the reaction FMN + ATP + H(+) = FAD + diphosphate. Its pathway is cofactor biosynthesis; FAD biosynthesis; FAD from FMN: step 1/1. Functionally, catalyzes the transfer of the AMP portion of ATP to flavin mononucleotide (FMN) to produce flavin adenine dinucleotide (FAD) coenzyme. The polypeptide is FAD synthase (Methanothrix thermoacetophila (strain DSM 6194 / JCM 14653 / NBRC 101360 / PT) (Methanosaeta thermophila)).